Here is a 301-residue protein sequence, read N- to C-terminus: tRNA dimethylallyltransferase (301 aa).

10–17 (GATATGKT) provides a ligand contact to ATP. Residue 12 to 17 (TATGKT) participates in substrate binding. The segment at 35–38 (DSRQ) is interaction with substrate tRNA.

It belongs to the IPP transferase family. Monomer. Requires Mg(2+) as cofactor.

It carries out the reaction adenosine(37) in tRNA + dimethylallyl diphosphate = N(6)-dimethylallyladenosine(37) in tRNA + diphosphate. Catalyzes the transfer of a dimethylallyl group onto the adenine at position 37 in tRNAs that read codons beginning with uridine, leading to the formation of N6-(dimethylallyl)adenosine (i(6)A). This is tRNA dimethylallyltransferase from Crocosphaera subtropica (strain ATCC 51142 / BH68) (Cyanothece sp. (strain ATCC 51142)).